The following is a 217-amino-acid chain: Pyridoxine/pyridoxamine 5'-phosphate oxidase (217 aa).

FMN is bound by residues 66-71 (RMVLLK), 81-82 (FT), Arg-87, Lys-88, and Gln-110. Lys-71 contacts substrate. Substrate contacts are provided by Tyr-128, Arg-132, and Ser-136. Residues 145–146 (QS) and Trp-190 contribute to the FMN site. A substrate-binding site is contributed by 196 to 198 (RLH). Arg-200 lines the FMN pocket.

The protein belongs to the pyridoxamine 5'-phosphate oxidase family. In terms of assembly, homodimer. Requires FMN as cofactor.

It catalyses the reaction pyridoxamine 5'-phosphate + O2 + H2O = pyridoxal 5'-phosphate + H2O2 + NH4(+). It carries out the reaction pyridoxine 5'-phosphate + O2 = pyridoxal 5'-phosphate + H2O2. It participates in cofactor metabolism; pyridoxal 5'-phosphate salvage; pyridoxal 5'-phosphate from pyridoxamine 5'-phosphate: step 1/1. Its pathway is cofactor metabolism; pyridoxal 5'-phosphate salvage; pyridoxal 5'-phosphate from pyridoxine 5'-phosphate: step 1/1. Catalyzes the oxidation of either pyridoxine 5'-phosphate (PNP) or pyridoxamine 5'-phosphate (PMP) into pyridoxal 5'-phosphate (PLP). The chain is Pyridoxine/pyridoxamine 5'-phosphate oxidase from Colwellia psychrerythraea (strain 34H / ATCC BAA-681) (Vibrio psychroerythus).